Consider the following 185-residue polypeptide: Threonylcarbamoyl-AMP synthase (185 aa).

Residues 4-185 (SWRVQQAAQD…IATGQVMRAG (182 aa)) form the YrdC-like domain.

This sequence belongs to the SUA5 family. TsaC subfamily.

It localises to the cytoplasm. It catalyses the reaction L-threonine + hydrogencarbonate + ATP = L-threonylcarbamoyladenylate + diphosphate + H2O. In terms of biological role, required for the formation of a threonylcarbamoyl group on adenosine at position 37 (t(6)A37) in tRNAs that read codons beginning with adenine. Catalyzes the conversion of L-threonine, HCO(3)(-)/CO(2) and ATP to give threonylcarbamoyl-AMP (TC-AMP) as the acyladenylate intermediate, with the release of diphosphate. The sequence is that of Threonylcarbamoyl-AMP synthase from Pseudomonas savastanoi pv. phaseolicola (strain 1448A / Race 6) (Pseudomonas syringae pv. phaseolicola (strain 1448A / Race 6)).